A 165-amino-acid chain; its full sequence is RxLR effector protein PITG_09218 (165 aa).

An N-terminal signal peptide occupies residues 1–24 (MRFSAFLTLLLVAFVASCSTFASA). The RxLR-dEER signature appears at 31–57 (RRLRADAAPVPVNKDNVAKLAGGFLEK). A helical transmembrane segment spans residues 129 to 149 (VTLGATVAGFAIYGAYKALFD).

Belongs to the RxLR effector family.

It localises to the secreted. Its subcellular location is the host mitochondrion membrane. The protein localises to the host endoplasmic reticulum membrane. Effector that enhances P.infestans colonization of Nicotiana benthamiana leaves. The sequence is that of RxLR effector protein PITG_09218 from Phytophthora infestans (strain T30-4) (Potato late blight agent).